Here is a 135-residue protein sequence, read N- to C-terminus: CDGSH iron-sulfur domain-containing protein 2A (135 aa).

The Lumenal portion of the chain corresponds to 1-37 (MVLETISRIIKIQLPAYLKKLPLPETIGGFARLTVSE). Residues 38-60 (WLRLLPLLGILALLGYLTIRPFL) traverse the membrane as a helical segment. Topologically, residues 61–135 (PKKKKQKDSL…GPLILKKKIL (75 aa)) are cytoplasmic. Residues cysteine 99, cysteine 101, cysteine 110, and histidine 114 each coordinate [2Fe-2S] cluster.

Belongs to the CISD protein family. CISD2 subfamily. As to quaternary structure, homodimer. [2Fe-2S] cluster serves as cofactor.

The protein localises to the endoplasmic reticulum membrane. Its subcellular location is the mitochondrion outer membrane. Regulator of autophagy that contributes to antagonize becn1-mediated cellular autophagy at the endoplasmic reticulum. Participates in the interaction of bcl2 with becn1 and is required for bcl2-mediated depression of endoplasmic reticulum Ca(2+) stores during autophagy. The protein is CDGSH iron-sulfur domain-containing protein 2A (cisd2a) of Salmo salar (Atlantic salmon).